A 705-amino-acid polypeptide reads, in one-letter code: FAD-dependent monooxygenase ATEG_03635 (705 aa).

Residues 86–115, Val-208, 308–310, and Ser-408 each bind FAD; these read DVLI…IVDK and RFY.

The protein belongs to the PheA/TfdB FAD monooxygenase family. It depends on FAD as a cofactor.

Its pathway is secondary metabolite biosynthesis. In terms of biological role, FAD-dependent monooxygenase; part of the cluster A that mediates the biosynthesis of azasperpyranones, members of the azaphilone family that exhibit anti-cancer activities. Azasperpyranones are synthesized by 2 clusters, A and B. Cluster A is responsible for the production of the polyhydric phenol moiety while the azaphilonoid scaffold is produced by the cluster B. The non-reducing polyketide synthase ATEG_03629 produces 5-methyl orsellinic acid, which is then reduced to 5-methyl orsellinic aldehyde by the NRPS-like protein ATEG_03630. 5-methyl orsellinic aldehyde is then first hydroxylated by the FAD-dependent monooxygenase ATEG_03635 and subsequently hydroxylated by the cytochrome P450 monooxygenase ATEG_03631 to produce the unstable polyhydric phenol precursor of azasperpyranones. On the other hand, the polyketide synthase ATEG_07659 is responsible for producing the 3,5-dimethyloctadienone moiety from acetyl-CoA, three malonyl-CoA, and two S-adenosyl methionines (SAM). The 3,5-dimethyloctadienone moiety is then loaded onto the SAT domain of ATEG_07661 and extended with four malonyl-CoA and one SAM, which leads to the formation of 2,4-dihydroxy-6-(5,7-dimethyl-2-oxo-trans-3-trans-5-nonadienyl)-3-methylbenzaldehyde (compound 8) after reductive release and aldol condensation. The FAD-dependent monooxygenase ATEG_07662 is the next enzyme in the biosynthesis sequence and hydroxylates the side chain at the benzylic position of compound 8. In Aspergillus nidulans, afoF, the ortholog of the FAD-dependent oxygenase ATEG_07660, is the key enzyme for the biosynthesis of asperfuranone by catalyzing the hydroxylation at C-8 of to prevent the formation of a six-membered ring hemiacetal intermediate and thus facilitating the formation of a five-membered ring to produce asperfuranone. In Aspergillus terreus, ATEG_07660 is probably not functional, which leads to the formation of the six-membered ring hemiacetal intermediate presperpyranone instead of asperfuranone. Finally, ATEG_03636 is involved in the condensation of the polyhydric phenol moiety produced by cluster A and the perasperpyranone precursor produced by cluster B, to yield azasperpyranone A. Further modifications of azasperpyranone A result in the production of derivatives, including azasperpyranone B to F. This chain is FAD-dependent monooxygenase ATEG_03635, found in Aspergillus terreus (strain NIH 2624 / FGSC A1156).